The sequence spans 1142 residues: Protein kinase C-like (1142 aa).

The REM-1 1 domain maps to 1 to 67; it reads MNDEDKVHDI…LRELQMRRLG (67 aa). The tract at residues 70 to 139 is disordered; that stretch reads VDNMSLGASP…PPDSNVPRAR (70 aa). In terms of domain architecture, REM-1 2 spans 149–226; the sequence is KFDTPHLGPR…LKRYEELHID (78 aa). The region spanning 231–349 is the C2 domain; the sequence is GPDDDSINLP…LRRKKIEAEM (119 aa). The interval 357 to 403 is disordered; the sequence is ADRVGSRAPPPQFPMGAQSPQFAAPPTSPGSQEQNTMIPPQAPPPSQ. The span at 385-394 shows a compositional bias: polar residues; the sequence is PGSQEQNTMI. 2 consecutive Phorbol-ester/DAG-type zinc fingers follow at residues 457–505 and 525–576; these read GHKF…VTKC and PHRF…PDFC. Disordered stretches follow at residues 592–622 and 651–807; these read TQKK…SGSI and SQTT…TDPG. The span at 613–622 shows a compositional bias: polar residues; sequence SKTSISSGSI. Low complexity-rich tracts occupy residues 663 to 677, 712 to 724, and 741 to 765; these read TSTS…AAAA, SAQQ…SPQQ, and PQAR…MYQQ. A Protein kinase domain is found at 817-1076; that stretch reads FNFLAVLGKG…AQEIMSQPFF (260 aa). Residues 823–831 and Lys846 each bind ATP; that span reads LGKGNFGKV. Asp942 (proton acceptor) is an active-site residue. In terms of domain architecture, AGC-kinase C-terminal spans 1077 to 1142; that stretch reads RNINWDDIYH…RGFSYTADFE (66 aa).

The protein belongs to the protein kinase superfamily. AGC Ser/Thr protein kinase family. PKC subfamily.

It catalyses the reaction L-seryl-[protein] + ATP = O-phospho-L-seryl-[protein] + ADP + H(+). The catalysed reaction is L-threonyl-[protein] + ATP = O-phospho-L-threonyl-[protein] + ADP + H(+). This Neurospora crassa (strain ATCC 24698 / 74-OR23-1A / CBS 708.71 / DSM 1257 / FGSC 987) protein is Protein kinase C-like.